The sequence spans 260 residues: Indole-3-glycerol phosphate synthase (260 aa).

The protein belongs to the TrpC family.

It carries out the reaction 1-(2-carboxyphenylamino)-1-deoxy-D-ribulose 5-phosphate + H(+) = (1S,2R)-1-C-(indol-3-yl)glycerol 3-phosphate + CO2 + H2O. Its pathway is amino-acid biosynthesis; L-tryptophan biosynthesis; L-tryptophan from chorismate: step 4/5. The polypeptide is Indole-3-glycerol phosphate synthase (Staphylococcus aureus (strain Mu3 / ATCC 700698)).